The following is a 211-amino-acid chain: Imidazole glycerol phosphate synthase subunit HisH (211 aa).

Positions 4–211 constitute a Glutamine amidotransferase type-1 domain; sequence TVALLDYGSG…QLLRNWINYI (208 aa). Cys82 functions as the Nucleophile in the catalytic mechanism. Catalysis depends on residues His192 and Glu194.

In terms of assembly, heterodimer of HisH and HisF.

The protein localises to the cytoplasm. It carries out the reaction 5-[(5-phospho-1-deoxy-D-ribulos-1-ylimino)methylamino]-1-(5-phospho-beta-D-ribosyl)imidazole-4-carboxamide + L-glutamine = D-erythro-1-(imidazol-4-yl)glycerol 3-phosphate + 5-amino-1-(5-phospho-beta-D-ribosyl)imidazole-4-carboxamide + L-glutamate + H(+). The catalysed reaction is L-glutamine + H2O = L-glutamate + NH4(+). The protein operates within amino-acid biosynthesis; L-histidine biosynthesis; L-histidine from 5-phospho-alpha-D-ribose 1-diphosphate: step 5/9. IGPS catalyzes the conversion of PRFAR and glutamine to IGP, AICAR and glutamate. The HisH subunit catalyzes the hydrolysis of glutamine to glutamate and ammonia as part of the synthesis of IGP and AICAR. The resulting ammonia molecule is channeled to the active site of HisF. The polypeptide is Imidazole glycerol phosphate synthase subunit HisH (hisH) (Corynebacterium glutamicum (strain ATCC 13032 / DSM 20300 / JCM 1318 / BCRC 11384 / CCUG 27702 / LMG 3730 / NBRC 12168 / NCIMB 10025 / NRRL B-2784 / 534)).